The primary structure comprises 108 residues: Glutaredoxin-1 (108 aa).

In terms of domain architecture, Glutaredoxin spans 3–106; the sequence is EEFVQQRLAN…DILSSIGVLR (104 aa). Cysteine 23 and cysteine 26 are joined by a disulfide.

It belongs to the glutaredoxin family.

It is found in the virion. Functionally, has thioltransferase and dehydroascorbate reductase activities. The polypeptide is Glutaredoxin-1 (OPG075) (Ectromelia virus (strain Moscow) (ECTV)).